The sequence spans 1571 residues: Guanine nucleotide-releasing factor 2 (1571 aa).

3 disordered regions span residues 28 to 85 (LPPH…RDTN), 202 to 271 (INSG…KLAR), and 287 to 316 (MRTTNNTLGRSHSPHSPRTKHGTKAPPTTE). Positions 55-73 (QLHHHHHQQHHHNHHRLWK) are enriched in basic residues. Residues 74-83 (TQRQSWSPRD) show a composition bias toward polar residues. Gly residues predominate over residues 230-248 (TPGGSSRVGGAGAGGGGGV). A compositionally biased stretch (polar residues) spans 287 to 297 (MRTTNNTLGRS). The span at 298–309 (HSPHSPRTKHGT) shows a compositional bias: basic residues. Ser-496 and Ser-523 each carry phosphoserine. 6 disordered regions span residues 513-580 (HNVN…QASP), 614-646 (RSRSPDENSQCSFDSALNHSREEEDQQQQHQHL), 695-719 (GEGVAAAASGDGETNSNRHSNESGF), 728-747 (STQTTDYSVQSSTKSSSSNS), 776-868 (QRHI…SEVA), and 879-898 (LNHHPHTASAGQLQQWHSKH). Thr-524 is modified (phosphothreonine). Ser-526 is subject to Phosphoserine. Residues 532–550 (SPPPKPPLPNRASNPPPLP) show a composition bias toward pro residues. An SH3-binding motif is present at residues 546–556 (PPPLPPKRRSQ). Low complexity predominate over residues 556 to 579 (QPSASAGTVGVGCSSSTSTSNQAS). Residue Ser-615 is modified to Phosphoserine. The span at 620-631 (ENSQCSFDSALN) shows a compositional bias: polar residues. Residues 697 to 707 (GVAAAASGDGE) are compositionally biased toward low complexity. Positions 708–718 (TNSNRHSNESG) are enriched in polar residues. 2 stretches are compositionally biased toward low complexity: residues 735-747 (SVQSSTKSSSSNS) and 780-824 (SSSS…DLAP). An SH3-binding motif is present at residues 820 to 831 (ADLAPALPPKSI). Residues 851 to 866 (VQSSSGWASHRSSQSE) show a composition bias toward polar residues. Short sequence motifs (SH3-binding) lie at residues 924–935 (DQEPPPLPIKKK) and 986–997 (LEMPPALPPKNY). Positions 1013-1038 (PVIVTTPPPSPKPTLGENGSTGRPDS) are disordered. One can recognise an N-terminal Ras-GEF domain in the interval 1170–1292 (DGPEVKGGYI…LRNKFVEKVT (123 aa)). The Ras-GEF domain occupies 1339 to 1564 (KSLEIAEQMT…WQISEKIKPR (226 aa)).

As to expression, ubiquitous.

Functionally, guanine nucleotide-releasing protein that binds to SH3 domain of Crk. Transduces signals from Crk to activate RAS. Also involved in MAPK activation. This Drosophila melanogaster (Fruit fly) protein is Guanine nucleotide-releasing factor 2 (C3G).